A 499-amino-acid chain; its full sequence is Protein-cysteine N-palmitoyltransferase HHAT (499 aa).

Topologically, residues 1 to 5 (MLPGW) are cytoplasmic. Residues 6–22 (ELTLCLLVSLGFHFRSF) form a helical membrane-spanning segment. The Lumenal segment spans residues 23–67 (YEVYKVSREHEEELDQEFELEMDTLFGGLKKDPTDFEWNFWMEWG). A helical membrane pass occupies residues 68 to 84 (KRRLVWLFIGHMAVSQL). Over 85 to 94 (ATLLTKKHRP) the chain is Cytoplasmic. An essential for palmitoylation of SHH region spans residues 91 to 155 (KHRPWIVMVY…TLRLQSVEEV (65 aa)). An intramembrane segment occupies 95 to 119 (WIVMVYGMWACWCVLGAPGVVMVLL). Topologically, residues 120–131 (HSTIAFCVAQFR) are cytoplasmic. The chain crosses the membrane as a helical span at residues 132–148 (SVLLSWLCSLLLLSTLR). The Lumenal portion of the chain corresponds to 149 to 162 (LQSVEEVKRRWYKT). The helical transmembrane segment at 163-183 (ENEYYLLQFTLTVRCLYYTSF) threads the bilayer. The Cytoplasmic portion of the chain corresponds to 184 to 208 (SLELCRQPPSAQPTPSAQGASHSYP). Residue C188 is the site of S-palmitoyl cysteine attachment. Residues 209–223 (WLLTYVFYYPVFHNG) lie within the membrane without spanning it. The Cytoplasmic segment spans residues 224 to 249 (PILNFPEFFRQMQQPELNSLQHSLCI). The S-palmitoyl cysteine moiety is linked to residue C248. The chain crosses the membrane as a helical span at residues 250–277 (VAKGLGRLLCWWWLAELMVHLMYMHALY). The Lumenal portion of the chain corresponds to 278–287 (SSAPLLESVS). The helical transmembrane segment at 288–316 (CWTLGGLALAQVLFFYVKYLVLFGVPALL) threads the bilayer. Topologically, residues 317 to 369 (MRLDGLTPPPLPRCVSTMFSFTGMWRYFDVGLHNFLIRYVYIPLGGSQHGLLG) are cytoplasmic. The S-palmitoyl cysteine moiety is linked to residue C330. Residues 370 to 386 (TLLSTATTFAFVSYWHG) form a helical membrane-spanning segment. H385 is a catalytic residue. The Lumenal portion of the chain corresponds to 387-389 (SYE). The chain crosses the membrane as a helical span at residues 390 to 405 (DLWCWAALNWLGVTVE). Topologically, residues 406–433 (SGVRRLLETPCVRETLARHLSPQAHHRL) are cytoplasmic. Residue C416 is the site of S-palmitoyl cysteine attachment. A helical membrane pass occupies residues 434–454 (HALLAACSTSMLILFNLVFLG). Residue 454–461 (GGIQVGKT) participates in GTP binding. The Lumenal portion of the chain corresponds to 455-468 (GIQVGKTYWNRIFL). A helical membrane pass occupies residues 469 to 487 (QGWPWVTLSVLGFLYCYSH). Residues 488–499 (VDIAWAQTYTVL) are Cytoplasmic-facing.

Belongs to the membrane-bound acyltransferase family. HHAT subfamily.

It is found in the endoplasmic reticulum membrane. The protein resides in the golgi apparatus membrane. The catalysed reaction is N-terminal L-cysteinyl-[protein] + hexadecanoyl-CoA = N-terminal N-hexadecanoyl-L-cysteinyl-[protein] + CoA + H(+). It catalyses the reaction N-terminal L-cysteinyl-[protein]-C-terminal glycyl cholesterol ester + hexadecanoyl-CoA = N-terminal N-hexadecanoyl-L-cysteinyl-[protein]-C-terminal glycyl cholesterol ester + CoA + H(+). Functionally, palmitoyl acyltransferase that catalyzes N-terminal palmitoylation of SHH; which is required for SHH signaling during limb development. It also catalyzes N-terminal palmitoylation of DHH. Promotes the transfer of palmitoyl-CoA from the cytoplasmic to the luminal side of the endoplasmic reticulum membrane, where SHH palmitoylation occurs. Plays a role in proper testis cord formation and the differentiation of Leydig cells. In Mus musculus (Mouse), this protein is Protein-cysteine N-palmitoyltransferase HHAT (Hhat).